The primary structure comprises 293 residues: Elongation factor Ts (293 aa).

The tract at residues 80 to 83 is involved in Mg(2+) ion dislocation from EF-Tu; the sequence is TDFV.

Belongs to the EF-Ts family.

It localises to the cytoplasm. Associates with the EF-Tu.GDP complex and induces the exchange of GDP to GTP. It remains bound to the aminoacyl-tRNA.EF-Tu.GTP complex up to the GTP hydrolysis stage on the ribosome. This is Elongation factor Ts from Lacticaseibacillus casei (strain BL23) (Lactobacillus casei).